The chain runs to 60 residues: UPF0434 protein Dtpsy_1553 (60 aa).

It belongs to the UPF0434 family.

This is UPF0434 protein Dtpsy_1553 from Acidovorax ebreus (strain TPSY) (Diaphorobacter sp. (strain TPSY)).